Consider the following 402-residue polypeptide: uncharacterized protein (402 aa).

Residues 332–402 (MFSSSSSSSE…PEPPPGKPGR (71 aa)) are disordered. Residues 370 to 379 (SETTSLQQYS) are compositionally biased toward polar residues. Residues 393–402 (PEPPPGKPGR) are compositionally biased toward pro residues.

This is an uncharacterized protein from Mus musculus (Mouse).